Here is a 78-residue protein sequence, read N- to C-terminus: D-alanyl carrier protein (78 aa).

A Carrier domain is found at 1–78 (MEFREQVLDL…KIVEALEELK (78 aa)). Residue Ser-36 is modified to O-(pantetheine 4'-phosphoryl)serine.

Belongs to the DltC family. 4'-phosphopantetheine is transferred from CoA to a specific serine of apo-DCP.

Its subcellular location is the cytoplasm. Its pathway is cell wall biogenesis; lipoteichoic acid biosynthesis. Carrier protein involved in the D-alanylation of lipoteichoic acid (LTA). The loading of thioester-linked D-alanine onto DltC is catalyzed by D-alanine--D-alanyl carrier protein ligase DltA. The DltC-carried D-alanyl group is further transferred to cell membrane phosphatidylglycerol (PG) by forming an ester bond, probably catalyzed by DltD. D-alanylation of LTA plays an important role in modulating the properties of the cell wall in Gram-positive bacteria, influencing the net charge of the cell wall. In Staphylococcus carnosus (strain TM300), this protein is D-alanyl carrier protein.